Reading from the N-terminus, the 1085-residue chain is Solute carrier family 12 member 4 (1085 aa).

At 1-119 (MPHFTVVPVD…RRAAKAPSMG (119 aa)) the chain is on the cytoplasmic side. 4 positions are modified to phosphoserine: Ser-24, Ser-47, Ser-81, and Ser-88. A discontinuously helical transmembrane segment spans residues 120–141 (TLMGVYLPCLQNIFGVILFLRL). Residues Asn-131 and Ile-132 each coordinate K(+). At 142–149 (TWMVGTAG) the chain is on the extracellular side. The chain crosses the membrane as a helical span at residues 150-172 (VLQALLIVLICCCCTLLTAISMS). The Cytoplasmic segment spans residues 173–196 (AIATNGVVPAGGSYFMISRSLGPE). The helical transmembrane segment at 197 to 225 (FGGAVGLCFYLGTTFAAAMYILGAIEILL) threads the bilayer. Position 216 (Tyr-216) interacts with K(+). Residues 226–248 (TYIAPPAAIFYPSGTHDMSSATL) lie on the Extracellular side of the membrane. 2 helical membrane-spanning segments follow: residues 249-271 (NNMR…VGVK) and 272-297 (YVNK…GGIK). Residues 298 to 419 (SIFDPPVFPV…LYVVADIATS (122 aa)) are Extracellular-facing. The cysteines at positions 308 and 323 are disulfide-linked. N-linked (GlcNAc...) asparagine glycosylation is found at Asn-312, Asn-331, and Asn-347. A disulfide bridge links Cys-343 with Cys-353. Residues 420 to 440 (FTVLVGIFFPSVTGIMAGSNR) traverse the membrane as a helical segment. K(+) is bound by residues Pro-429 and Thr-432. Residues Gly-433, Ile-434, and Met-435 each contribute to the chloride site. The Cytoplasmic segment spans residues 441–450 (SGDLRDAQKS). Residues 451–473 (IPVGTILAIVTTSLVYFSSVILF) form a helical membrane-spanning segment. Residues 474 to 504 (GACIEGVVLRDKYGDGVSRNLVVGTLAWPSP) lie on the Extracellular side of the membrane. The chain crosses the membrane as a helical span at residues 505–531 (WVIVVGSFFSTCGAGLQSLTGAPRLLQ). Topologically, residues 532–554 (AIAKDNIIPFLRVFGHGKANGEP) are cytoplasmic. 2 helical membrane passes run 555-575 (TWAL…ASLD) and 576-598 (MVAP…ACAV). A chloride-binding site is contributed by Tyr-589. Residues 599 to 612 (QTLLRTPNWRPRFK) are Cytoplasmic-facing. 2 helical membrane-spanning segments follow: residues 613-635 (YYHW…VSSW) and 636-651 (YYAL…IYKY). The Cytoplasmic portion of the chain corresponds to 652–1085 (IEYQGAEKEW…GGREVITIYS (434 aa)). Residues 665–681 (IRGLSLSAARYALLRLE) are scissor helix. ATP contacts are provided by Leu-697, Lys-699, Lys-707, Tyr-708, and Val-730. Ser-734 is subject to Phosphoserine. Gly-794, Trp-795, and Tyr-797 together coordinate ATP. A phosphoserine mark is found at Ser-916 and Ser-967. Thr-983 is modified (phosphothreonine). Ser-1050 carries the post-translational modification Phosphoserine.

Belongs to the SLC12A transporter family. K/Cl co-transporter subfamily. In terms of assembly, homodimer; adopts a domain-swap conformation at the scissor helices connecting the transmembrane domain and C-terminal domain. Heterodimer with other K-Cl cotransporters. Post-translationally, phosphorylated, phosphorylation may regulate transporter activity. As to expression, detected in embryo, adult heart, erythrocytes, brain, kidney, stomach, ovary, testis and liver.

The protein resides in the cell membrane. It carries out the reaction K(+)(in) + chloride(in) = K(+)(out) + chloride(out). Inhibited by WNK3. In terms of biological role, mediates electroneutral potassium-chloride cotransport when activated by cell swelling. May contribute to cell volume homeostasis in single cells. May be involved in the regulation of basolateral Cl(-) exit in NaCl absorbing epithelia. In Mus musculus (Mouse), this protein is Solute carrier family 12 member 4 (Slc12a4).